We begin with the raw amino-acid sequence, 37 residues long: Cytochrome b6-f complex subunit 5 (37 aa).

Residues 5 to 25 (LLSGIILGLIPVTLSGLLVAA) traverse the membrane as a helical segment.

Belongs to the PetG family. In terms of assembly, the 4 large subunits of the cytochrome b6-f complex are cytochrome b6, subunit IV (17 kDa polypeptide, PetD), cytochrome f and the Rieske protein, while the 4 small subunits are PetG, PetL, PetM and PetN. The complex functions as a dimer.

The protein localises to the plastid. The protein resides in the chloroplast thylakoid membrane. Component of the cytochrome b6-f complex, which mediates electron transfer between photosystem II (PSII) and photosystem I (PSI), cyclic electron flow around PSI, and state transitions. PetG is required for either the stability or assembly of the cytochrome b6-f complex. This is Cytochrome b6-f complex subunit 5 from Porphyra purpurea (Red seaweed).